We begin with the raw amino-acid sequence, 117 residues long: Large ribosomal subunit protein bL19 (117 aa).

It belongs to the bacterial ribosomal protein bL19 family.

In terms of biological role, this protein is located at the 30S-50S ribosomal subunit interface and may play a role in the structure and function of the aminoacyl-tRNA binding site. The protein is Large ribosomal subunit protein bL19 of Shewanella sediminis (strain HAW-EB3).